Reading from the N-terminus, the 172-residue chain is Ribosome maturation factor RimM (172 aa).

Residues 95–168 (AEGEFYYHQI…RVDVEIMEGL (74 aa)) enclose the PRC barrel domain.

This sequence belongs to the RimM family. As to quaternary structure, binds ribosomal protein uS19.

The protein resides in the cytoplasm. In terms of biological role, an accessory protein needed during the final step in the assembly of 30S ribosomal subunit, possibly for assembly of the head region. Essential for efficient processing of 16S rRNA. May be needed both before and after RbfA during the maturation of 16S rRNA. It has affinity for free ribosomal 30S subunits but not for 70S ribosomes. In Streptococcus equi subsp. zooepidemicus (strain H70), this protein is Ribosome maturation factor RimM.